Reading from the N-terminus, the 428-residue chain is MPGIVLIGAQWGDEGKGKATDLIGTKVDYVARFNGGNNAGHTVVVGDESYALHLLPSGIISPNTTPVIGNGVVVDPEVLFQEIDGLESRGVDCSRLLVSESAHIIAPYHRVLDKVTERFLGKHKIGTTGRGIGPAYADKINRVGIRVHDLFNAEHLHDKVEASLHQKNQMLVKLYNRRPIDVDETTDELLKLGERLKPYVANTSLVLNKALDEGKTVLFEGGQATMLDVDHGTYPFVTSSNPTAGGACTGTGVGPTKITRVVGVSKAYVTRVGEGPFPTELFGEEGEWLRAQGHEYGVTTGRPRRCGWFDAVVNRYAAQVNGLTDIVLTKLDVLTGLKEIPLCVAYDVNGERRDDMPTDQAEFAAAKPIYESMPGWDEDISQVHDFNDLPKTCQDYVKRLEELSGCRISVIGTGPQRDHIIQINSLID.

GTP-binding positions include 12-18 (GDEGKGK) and 40-42 (GHT). The active-site Proton acceptor is D13. 2 residues coordinate Mg(2+): D13 and G40. IMP-binding positions include 13–16 (DEGK), 38–41 (NAGH), T128, R142, Q223, T238, and R302. H41 (proton donor) is an active-site residue. A substrate-binding site is contributed by 298–304 (VTTGRPR). GTP contacts are provided by residues R304, 330 to 332 (KLD), and 412 to 414 (GTG).

It belongs to the adenylosuccinate synthetase family. As to quaternary structure, homodimer. Requires Mg(2+) as cofactor.

The protein resides in the cytoplasm. The catalysed reaction is IMP + L-aspartate + GTP = N(6)-(1,2-dicarboxyethyl)-AMP + GDP + phosphate + 2 H(+). It participates in purine metabolism; AMP biosynthesis via de novo pathway; AMP from IMP: step 1/2. Plays an important role in the de novo pathway of purine nucleotide biosynthesis. Catalyzes the first committed step in the biosynthesis of AMP from IMP. The polypeptide is Adenylosuccinate synthetase (Bifidobacterium adolescentis (strain ATCC 15703 / DSM 20083 / NCTC 11814 / E194a)).